A 75-amino-acid chain; its full sequence is Transcription attenuation protein MtrB (75 aa).

It belongs to the MtrB family. In terms of assembly, oligomer of 11 identical subunits arranged in doughnut-like structure.

Functionally, required for transcription attenuation control in the trp operon. This trans-acting factor binds to trinucleotide repeats (GAG or UAG) located in the trp leader transcript causing transcription termination. Binds the leader RNA only in presence of L-tryptophan. This is Transcription attenuation protein MtrB (mtrB) from Bacillus subtilis (strain 168).